We begin with the raw amino-acid sequence, 265 residues long: Undecaprenyl-diphosphatase (265 aa).

7 helical membrane-spanning segments follow: residues 38–58 (SDMF…IIYW), 80–100 (LIVA…LGFE), 107–127 (PIAW…WAAA), 135–155 (ITWL…VFPG), 175–195 (AAAT…ASGY), 213–233 (ALAI…KWLL), and 244–264 (FAIY…SGLI).

The protein belongs to the UppP family.

It localises to the cell inner membrane. It carries out the reaction di-trans,octa-cis-undecaprenyl diphosphate + H2O = di-trans,octa-cis-undecaprenyl phosphate + phosphate + H(+). In terms of biological role, catalyzes the dephosphorylation of undecaprenyl diphosphate (UPP). Confers resistance to bacitracin. In Rhizobium etli (strain CIAT 652), this protein is Undecaprenyl-diphosphatase.